The following is a 639-amino-acid chain: Probable serine/threonine-protein kinase DDB_G0282777 (639 aa).

A coiled-coil region spans residues 7–122 (LKENKESLKD…EDLKSIILTS (116 aa)). The region spanning 233 to 588 (MHMVGDIKKG…SNNNQNHTNI (356 aa)) is the Protein kinase domain. Residues 239 to 247 (IKKGSISSD) and Lys-284 contribute to the ATP site. Asp-439 functions as the Proton acceptor in the catalytic mechanism. A disordered region spans residues 601 to 639 (NTLETSTTNPNTNTTTSDTNTSTTSTTNTNTTTSNTITA).

The protein belongs to the protein kinase superfamily. Ser/Thr protein kinase family.

It carries out the reaction L-seryl-[protein] + ATP = O-phospho-L-seryl-[protein] + ADP + H(+). The enzyme catalyses L-threonyl-[protein] + ATP = O-phospho-L-threonyl-[protein] + ADP + H(+). The protein is Probable serine/threonine-protein kinase DDB_G0282777 of Dictyostelium discoideum (Social amoeba).